We begin with the raw amino-acid sequence, 529 residues long: Bifunctional purine biosynthesis protein PurH (529 aa).

An MGS-like domain is found at Met1 to Val148.

It belongs to the PurH family.

It catalyses the reaction (6R)-10-formyltetrahydrofolate + 5-amino-1-(5-phospho-beta-D-ribosyl)imidazole-4-carboxamide = 5-formamido-1-(5-phospho-D-ribosyl)imidazole-4-carboxamide + (6S)-5,6,7,8-tetrahydrofolate. The catalysed reaction is IMP + H2O = 5-formamido-1-(5-phospho-D-ribosyl)imidazole-4-carboxamide. It functions in the pathway purine metabolism; IMP biosynthesis via de novo pathway; 5-formamido-1-(5-phospho-D-ribosyl)imidazole-4-carboxamide from 5-amino-1-(5-phospho-D-ribosyl)imidazole-4-carboxamide (10-formyl THF route): step 1/1. The protein operates within purine metabolism; IMP biosynthesis via de novo pathway; IMP from 5-formamido-1-(5-phospho-D-ribosyl)imidazole-4-carboxamide: step 1/1. The protein is Bifunctional purine biosynthesis protein PurH of Salmonella dublin (strain CT_02021853).